A 1038-amino-acid chain; its full sequence is Probable LRR receptor-like serine/threonine-protein kinase At1g53430 (1038 aa).

A signal peptide spans 1 to 28 (MGFIFSTEKVVYVLLLIFVCLENFGSNA). Residues 29–609 (QLLPEDEVQT…VDTGKPLSNG (581 aa)) lie on the Extracellular side of the membrane. N-linked (GlcNAc...) asparagine glycans are attached at residues Asn-48, Asn-77, Asn-85, Asn-112, and Asn-127. LRR repeat units follow at residues 113–137 (LTRL…LSQI), 139–160 (LEIL…LGDI), 161–184 (TTLT…LGNL), 185–208 (RSLK…LSNL), 210–234 (NLTE…NWTL), and 236–256 (ERLD…ISNL). 5 N-linked (GlcNAc...) asparagine glycosylation sites follow: Asn-196, Asn-210, Asn-231, Asn-255, and Asn-258. LRR repeat units lie at residues 259–281 (LTEL…LRNL), 282–305 (MKMK…IGSM), 306–328 (SELK…TFRN), 330–351 (DAFN…QFII), and 352–374 (NSKE…SCNQ). N-linked (GlcNAc...) asparagine glycans are attached at residues Asn-339, Asn-363, Asn-471, and Asn-561. The helical transmembrane segment at 610–630 (AVAGIVIAACAVFGLLVLVIL) threads the bilayer. The Cytoplasmic portion of the chain corresponds to 631–1038 (RLTGYLGGKE…LDDLTDVKIE (408 aa)). Thr-658 is subject to Phosphothreonine. In terms of domain architecture, Protein kinase spans 669 to 950 (FDPENKIGEG…EGKIKVQPPL (282 aa)). ATP contacts are provided by residues 675-683 (IGEGGFGPV) and Lys-697. Tyr-742 carries the phosphotyrosine modification. The active-site Proton acceptor is the Asp-795. Ser-828 carries the post-translational modification Phosphoserine. 2 positions are modified to phosphothreonine: Thr-829 and Thr-834. Residue Tyr-842 is modified to Phosphotyrosine. A disordered region spans residues 984–1038 (RNREQDISSSSMDGPWVDSSFSEPGKDVSLQQQEEGRSSSSSRKLLDDLTDVKIE). A compositionally biased stretch (basic and acidic residues) spans 1027-1038 (KLLDDLTDVKIE).

The protein belongs to the protein kinase superfamily. Ser/Thr protein kinase family.

It localises to the membrane. The enzyme catalyses L-seryl-[protein] + ATP = O-phospho-L-seryl-[protein] + ADP + H(+). It catalyses the reaction L-threonyl-[protein] + ATP = O-phospho-L-threonyl-[protein] + ADP + H(+). The chain is Probable LRR receptor-like serine/threonine-protein kinase At1g53430 from Arabidopsis thaliana (Mouse-ear cress).